Here is a 98-residue protein sequence, read N- to C-terminus: Large ribosomal subunit protein bL21 (98 aa).

This sequence belongs to the bacterial ribosomal protein bL21 family. As to quaternary structure, part of the 50S ribosomal subunit. Contacts protein L20.

In terms of biological role, this protein binds to 23S rRNA in the presence of protein L20. The chain is Large ribosomal subunit protein bL21 from Aquifex aeolicus (strain VF5).